Reading from the N-terminus, the 389-residue chain is Metal tolerance protein 2 (389 aa).

Residues 1-81 (MGFRLAHLAA…GGEASERIFR (81 aa)) are Cytoplasmic-facing. Residues 82 to 102 (LGLAADVVLTVGKAVTGYLSG) form a helical membrane-spanning segment. Residues 103–104 (ST) lie on the Vacuolar side of the membrane. The helical transmembrane segment at 105 to 125 (AIAADAAHSLSDIVLSGVALL) threads the bilayer. Over 126–148 (SYKAAKAPRDKEHPYGHGKFESL) the chain is Cytoplasmic. Residues 149–169 (GALGISSMLLVTAGGIAWHAF) traverse the membrane as a helical segment. Topologically, residues 170–206 (DVLQGVMSSAPDIIGNVSHAHHSHGSSGHHHGIDLEH) are vacuolar. Residues 207–227 (PILALSVTAFAISVKEGLYWI) traverse the membrane as a helical segment. Residues 228-250 (TKRAGEKEGSGLMKANAWHHRSD) are Cytoplasmic-facing. A helical transmembrane segment spans residues 251 to 271 (AISSVVALLGVGGSILGVPYL). Topologically, residues 272–275 (DPLA) are vacuolar. Residues 276-296 (GLVVSGMILKAGVHTGYESVL) form a helical membrane-spanning segment. At 297–389 (ELVDAAVDPS…SLQPLNQNAL (93 aa)) the chain is on the cytoplasmic side.

The protein belongs to the cation diffusion facilitator (CDF) transporter (TC 2.A.4) family. SLC30A subfamily.

It localises to the vacuole membrane. In terms of biological role, involved in sequestration of excess metal in the cytoplasm into vacuoles to maintain metal homeostasis. In Oryza sativa subsp. japonica (Rice), this protein is Metal tolerance protein 2 (MTP2).